A 278-amino-acid chain; its full sequence is ADP-dependent (S)-NAD(P)H-hydrate dehydratase (278 aa).

A YjeF C-terminal domain is found at 5–272 (TTEIVSRTII…TRIPTYMHRF (268 aa)). (6S)-NADPHX contacts are provided by alanine 40, glycine 103, and histidine 152. Glycine 214 serves as a coordination point for AMP. (6S)-NADPHX is bound at residue aspartate 215.

The protein belongs to the NnrD/CARKD family. In terms of assembly, homotetramer. Mg(2+) serves as cofactor.

The enzyme catalyses (6S)-NADHX + ADP = AMP + phosphate + NADH + H(+). The catalysed reaction is (6S)-NADPHX + ADP = AMP + phosphate + NADPH + H(+). Functionally, catalyzes the dehydration of the S-form of NAD(P)HX at the expense of ADP, which is converted to AMP. Together with NAD(P)HX epimerase, which catalyzes the epimerization of the S- and R-forms, the enzyme allows the repair of both epimers of NAD(P)HX, a damaged form of NAD(P)H that is a result of enzymatic or heat-dependent hydration. The protein is ADP-dependent (S)-NAD(P)H-hydrate dehydratase of Lactiplantibacillus plantarum (strain ATCC BAA-793 / NCIMB 8826 / WCFS1) (Lactobacillus plantarum).